A 94-amino-acid polypeptide reads, in one-letter code: Co-chaperonin GroES (94 aa).

This sequence belongs to the GroES chaperonin family. As to quaternary structure, heptamer of 7 subunits arranged in a ring. Interacts with the chaperonin GroEL.

It localises to the cytoplasm. Its function is as follows. Together with the chaperonin GroEL, plays an essential role in assisting protein folding. The GroEL-GroES system forms a nano-cage that allows encapsulation of the non-native substrate proteins and provides a physical environment optimized to promote and accelerate protein folding. GroES binds to the apical surface of the GroEL ring, thereby capping the opening of the GroEL channel. In Geobacillus sp. (strain WCH70), this protein is Co-chaperonin GroES.